The following is a 270-amino-acid chain: MPRLPLLLLLLPSLARGLGLRDAGRRHPECSPCQQDRCPAPSPCPAPWISARDECGCCARCLGAEGASCGGPVGSRCGPGLVCASRASGTAPEGTGLCVCAQRGAVCGSDGRSYSSICALRLRARHAPRAHHGHLHKARDGPCEFAPVVLMPPRDIHNVTGTQVFLSCEVKAVPTPVITWKKVKHSPEGTEGLEELPGDHVNIAVQVRGGPSDHETTSWILINPLRKEDEGVYHCHAANAIGEAQSHGTVTVLDLNRYKSLYSSVPGDLL.

An N-terminal signal peptide occupies residues 1–17 (MPRLPLLLLLLPSLARG). Positions 26–101 (RHPECSPCQQ…PEGTGLCVCA (76 aa)) constitute an IGFBP N-terminal domain. Intrachain disulfides connect C30–C55, C33–C57, C38–C58, C44–C61, C69–C83, C77–C98, and C107–C143. Positions 87–145 (ASGTAPEGTGLCVCAQRGAVCGSDGRSYSSICALRLRARHAPRAHHGHLHKARDGPCEF) constitute a Kazal-like domain. In terms of domain architecture, Ig-like C2-type spans 147–251 (PVVLMPPRDI…GEAQSHGTVT (105 aa)). Residue N158 is glycosylated (N-linked (GlcNAc...) asparagine). C168 and C235 are oxidised to a cystine.

It is found in the secreted. Functionally, IGF-binding proteins prolong the half-life of IGFs and have been shown to either inhibit or stimulate the growth promoting effects of the IGFs in cell culture. They alter the interaction of IGFs with their cell surface receptors. This Mus musculus (Mouse) protein is Insulin-like growth factor-binding protein-like 1 (Igfbpl1).